The chain runs to 149 residues: Protein cornichon homolog 2 (149 aa).

3 helical membrane passes run 3-23 (IELI…GLTA), 59-79 (ALCA…MAPV), and 117-137 (YFSL…TLFI).

It belongs to the cornichon family.

It localises to the endoplasmic reticulum membrane. It is found in the golgi apparatus membrane. Its function is as follows. Acts as a cargo receptor necessary for the transportation of secretory proteins from the endoplasmic reticulum (ER) in COPII-coated vesicles targeted to the Golgi apparatus. The sequence is that of Protein cornichon homolog 2 from Oryza sativa subsp. japonica (Rice).